We begin with the raw amino-acid sequence, 398 residues long: 1-deoxy-D-xylulose 5-phosphate reductoisomerase (398 aa).

T11, G12, S13, I14, and N125 together coordinate NADPH. K126 is a binding site for 1-deoxy-D-xylulose 5-phosphate. E127 provides a ligand contact to NADPH. D151 contributes to the Mn(2+) binding site. Residues S152, E153, S186, and H209 each coordinate 1-deoxy-D-xylulose 5-phosphate. E153 lines the Mn(2+) pocket. G215 serves as a coordination point for NADPH. 1-deoxy-D-xylulose 5-phosphate-binding residues include S222, N227, K228, and E231. Position 231 (E231) interacts with Mn(2+).

The protein belongs to the DXR family. Mg(2+) serves as cofactor. It depends on Mn(2+) as a cofactor.

It catalyses the reaction 2-C-methyl-D-erythritol 4-phosphate + NADP(+) = 1-deoxy-D-xylulose 5-phosphate + NADPH + H(+). It functions in the pathway isoprenoid biosynthesis; isopentenyl diphosphate biosynthesis via DXP pathway; isopentenyl diphosphate from 1-deoxy-D-xylulose 5-phosphate: step 1/6. Its function is as follows. Catalyzes the NADPH-dependent rearrangement and reduction of 1-deoxy-D-xylulose-5-phosphate (DXP) to 2-C-methyl-D-erythritol 4-phosphate (MEP). The polypeptide is 1-deoxy-D-xylulose 5-phosphate reductoisomerase (Acinetobacter baumannii (strain AB307-0294)).